Here is a 129-residue protein sequence, read N- to C-terminus: Small ribosomal subunit protein uS11 (129 aa).

It belongs to the universal ribosomal protein uS11 family. Part of the 30S ribosomal subunit. Interacts with proteins S7 and S18. Binds to IF-3.

Functionally, located on the platform of the 30S subunit, it bridges several disparate RNA helices of the 16S rRNA. Forms part of the Shine-Dalgarno cleft in the 70S ribosome. This Bartonella bacilliformis (strain ATCC 35685 / KC583 / Herrer 020/F12,63) protein is Small ribosomal subunit protein uS11.